A 421-amino-acid polypeptide reads, in one-letter code: UDP-N-acetylglucosamine 1-carboxyvinyltransferase 1 (421 aa).

Residue 22 to 23 (KN) participates in phosphoenolpyruvate binding. Arginine 95 provides a ligand contact to UDP-N-acetyl-alpha-D-glucosamine. Cysteine 119 acts as the Proton donor in catalysis. Cysteine 119 is modified (2-(S-cysteinyl)pyruvic acid O-phosphothioketal). UDP-N-acetyl-alpha-D-glucosamine is bound by residues 124-128 (RPIEQ), aspartate 308, and valine 330.

It belongs to the EPSP synthase family. MurA subfamily.

The protein resides in the cytoplasm. The catalysed reaction is phosphoenolpyruvate + UDP-N-acetyl-alpha-D-glucosamine = UDP-N-acetyl-3-O-(1-carboxyvinyl)-alpha-D-glucosamine + phosphate. It functions in the pathway cell wall biogenesis; peptidoglycan biosynthesis. Functionally, cell wall formation. Adds enolpyruvyl to UDP-N-acetylglucosamine. This Staphylococcus epidermidis (strain ATCC 35984 / DSM 28319 / BCRC 17069 / CCUG 31568 / BM 3577 / RP62A) protein is UDP-N-acetylglucosamine 1-carboxyvinyltransferase 1.